Reading from the N-terminus, the 273-residue chain is NADPH-dependent 7-cyano-7-deazaguanine reductase (273 aa).

81–83 serves as a coordination point for substrate; it reads VES. 83–84 is an NADPH binding site; sequence SK. Cys179 serves as the catalytic Thioimide intermediate. The active-site Proton donor is Asp186. 218–219 lines the substrate pocket; it reads AE. Residue 247 to 248 coordinates NADPH; the sequence is RG.

Belongs to the GTP cyclohydrolase I family. QueF type 2 subfamily. As to quaternary structure, homodimer.

The protein resides in the cytoplasm. It carries out the reaction 7-aminomethyl-7-carbaguanine + 2 NADP(+) = 7-cyano-7-deazaguanine + 2 NADPH + 3 H(+). Its pathway is tRNA modification; tRNA-queuosine biosynthesis. Functionally, catalyzes the NADPH-dependent reduction of 7-cyano-7-deazaguanine (preQ0) to 7-aminomethyl-7-deazaguanine (preQ1). The polypeptide is NADPH-dependent 7-cyano-7-deazaguanine reductase (Rickettsia massiliae (strain Mtu5)).